We begin with the raw amino-acid sequence, 365 residues long: Peptide chain release factor 2 (365 aa).

At glutamine 252 the chain carries N5-methylglutamine.

The protein belongs to the prokaryotic/mitochondrial release factor family. Methylated by PrmC. Methylation increases the termination efficiency of RF2.

The protein resides in the cytoplasm. In terms of biological role, peptide chain release factor 2 directs the termination of translation in response to the peptide chain termination codons UGA and UAA. The polypeptide is Peptide chain release factor 2 (Pectobacterium atrosepticum (strain SCRI 1043 / ATCC BAA-672) (Erwinia carotovora subsp. atroseptica)).